A 137-amino-acid chain; its full sequence is Large ribosomal subunit protein uL16 (137 aa).

It belongs to the universal ribosomal protein uL16 family. In terms of assembly, part of the 50S ribosomal subunit.

Functionally, binds 23S rRNA and is also seen to make contacts with the A and possibly P site tRNAs. The protein is Large ribosomal subunit protein uL16 of Francisella tularensis subsp. holarctica (strain FTNF002-00 / FTA).